A 135-amino-acid polypeptide reads, in one-letter code: Transcription antitermination protein NusB (135 aa).

Belongs to the NusB family.

Its function is as follows. Involved in transcription antitermination. Required for transcription of ribosomal RNA (rRNA) genes. Binds specifically to the boxA antiterminator sequence of the ribosomal RNA (rrn) operons. The protein is Transcription antitermination protein NusB of Lacticaseibacillus casei (strain BL23) (Lactobacillus casei).